We begin with the raw amino-acid sequence, 251 residues long: Hydroxyacylglutathione hydrolase (251 aa).

Residues H58, H60, D62, H63, H116, D135, and H173 each contribute to the Zn(2+) site.

The protein belongs to the metallo-beta-lactamase superfamily. Glyoxalase II family. In terms of assembly, monomer. It depends on Zn(2+) as a cofactor.

The enzyme catalyses an S-(2-hydroxyacyl)glutathione + H2O = a 2-hydroxy carboxylate + glutathione + H(+). It functions in the pathway secondary metabolite metabolism; methylglyoxal degradation; (R)-lactate from methylglyoxal: step 2/2. Its function is as follows. Thiolesterase that catalyzes the hydrolysis of S-D-lactoyl-glutathione to form glutathione and D-lactic acid. This chain is Hydroxyacylglutathione hydrolase, found in Bdellovibrio bacteriovorus (strain ATCC 15356 / DSM 50701 / NCIMB 9529 / HD100).